We begin with the raw amino-acid sequence, 766 residues long: Tripartite terminase subunit 1 (766 aa).

The C3H1-type zinc-finger motif lies at 191–219 (CSVCFEELCVTANQGEAVHRRLLECTCDH). 683–690 (FSSVFHCG) serves as a coordination point for ATP.

The protein belongs to the herpesviridae TRM1 protein family. Associates with TRM2 and TRM3 to form the tripartite terminase complex. Interacts with portal protein.

The protein resides in the host nucleus. Its function is as follows. Component of the molecular motor that translocates viral genomic DNA in empty capsid during DNA packaging. Forms a tripartite terminase complex together with TRM2 and TRM3 in the host cytoplasm. Once the complex reaches the host nucleus, it interacts with the capsid portal vertex. This portal forms a ring in which genomic DNA is translocated into the capsid. TRM1 carries an endonuclease activity that plays an important role for the cleavage of concatemeric viral DNA into unit length genomes. The chain is Tripartite terminase subunit 1 from Equus caballus (Horse).